We begin with the raw amino-acid sequence, 260 residues long: Carbonic anhydrase 2 (260 aa).

An N-acetylserine modification is found at S2. S2 is subject to Phosphoserine. The 257-residue stretch at 3 to 259 (HHWGYGKHNG…LKNRQVRGFP (257 aa)) folds into the Alpha-carbonic anhydrase domain. H64 functions as the Proton donor/acceptor in the catalytic mechanism. Zn(2+)-binding residues include H94, H96, and H119. Phosphoserine occurs at positions 165 and 172. A substrate-binding site is contributed by 198-199 (TT).

It belongs to the alpha-carbonic anhydrase family. Interacts with SLC4A4. Interaction with SLC4A7 regulates SLC4A7 transporter activity. It depends on Zn(2+) as a cofactor.

It localises to the cytoplasm. It is found in the cell membrane. It carries out the reaction hydrogencarbonate + H(+) = CO2 + H2O. The enzyme catalyses urea = cyanamide + H2O. Its activity is regulated as follows. Inhibited by acetazolamide. Catalyzes the reversible hydration of carbon dioxide. Can also hydrate cyanamide to urea. Involved in the regulation of fluid secretion into the anterior chamber of the eye. Essential for bone resorption and osteoclast differentiation. Contributes to intracellular pH regulation in the duodenal upper villous epithelium during proton-coupled peptide absorption. Stimulates the chloride-bicarbonate exchange activity of SLC26A6. The sequence is that of Carbonic anhydrase 2 (CA2) from Bos taurus (Bovine).